We begin with the raw amino-acid sequence, 168 residues long: MLPAALLRHPGLRRLVLQARTYAQAAASPAPAAGPGQMSFTFASPTQVFFDGANVRQVDVPTLTGAFGILASHVPTLQVLRPGLVMVHAEDGTTTKYFVSSGSVTVNADSSVQLLAEEVVTLDMLDLGAARANLEKAQSELSGAADEAARAEIQIRIEANEALVKALE.

The transit peptide at 1–22 directs the protein to the mitochondrion; it reads MLPAALLRHPGLRRLVLQARTY. N6-acetyllysine; alternate is present on residues K136 and K165. 2 positions are modified to N6-succinyllysine; alternate: K136 and K165.

It belongs to the ATPase epsilon chain family. As to quaternary structure, component of the ATP synthase complex composed at least of ATP5F1A/subunit alpha, ATP5F1B/subunit beta, ATP5MC1/subunit c (homooctomer), MT-ATP6/subunit a, MT-ATP8/subunit 8, ATP5ME/subunit e, ATP5MF/subunit f, ATP5MG/subunit g, ATP5MK/subunit k, ATP5MJ/subunit j, ATP5F1C/subunit gamma, ATP5F1D/subunit delta, ATP5F1E/subunit epsilon, ATP5PF/subunit F6, ATP5PB/subunit b, ATP5PD/subunit d, ATP5PO/subunit OSCP. ATP synthase complex consists of a soluble F(1) head domain (subunits alpha(3) and beta(3)) - the catalytic core - and a membrane F(0) domain - the membrane proton channel (subunits c, a, 8, e, f, g, k and j). These two domains are linked by a central stalk (subunits gamma, delta, and epsilon) rotating inside the F1 region and a stationary peripheral stalk (subunits F6, b, d, and OSCP). Component of a complex composed at least by ATPIF1, ATP5F1A, ATP5F1B, ATP5F1C AND ATP5F1E.

Its subcellular location is the mitochondrion. The protein resides in the mitochondrion inner membrane. Subunit delta, of the mitochondrial membrane ATP synthase complex (F(1)F(0) ATP synthase or Complex V) that produces ATP from ADP in the presence of a proton gradient across the membrane which is generated by electron transport complexes of the respiratory chain. ATP synthase complex consist of a soluble F(1) head domain - the catalytic core - and a membrane F(1) domain - the membrane proton channel. These two domains are linked by a central stalk rotating inside the F(1) region and a stationary peripheral stalk. During catalysis, ATP synthesis in the catalytic domain of F(1) is coupled via a rotary mechanism of the central stalk subunits to proton translocation. In vivo, can only synthesize ATP although its ATP hydrolase activity can be activated artificially in vitro. With the central stalk subunit gamma, is essential for the biogenesis of F(1) catalytic part of the ATP synthase complex namely in the formation of F1 assembly intermediate. This Rattus norvegicus (Rat) protein is ATP synthase F(1) complex subunit delta, mitochondrial.